The sequence spans 208 residues: Truncated thymidylate kinase (208 aa).

Belongs to the thymidylate kinase family.

Its function is as follows. Catalyzes the conversion of dTMP to dTDP. The polypeptide is Truncated thymidylate kinase (TMK) (Ornithodoros (relapsing fever ticks)).